The following is a 174-amino-acid chain: MNFNLFPLFAVEGGFGLNLNPLDTNLINLIIVIGVLFTFLRGFLGEMLERRRQAILANLSDAEQNLKNASVALNKAQLDLAEAQERAARILADGKTRAESIRVNSERRTIDAMAALKQDAIADLSAEMVRISEELRLQTALQAIEKAMVTLPTKLDETAHSKLIDQSIVNLEQA.

A helical transmembrane segment spans residues 26-46; the sequence is LINLIIVIGVLFTFLRGFLGE.

This sequence belongs to the ATPase B chain family. As to quaternary structure, F-type ATPases have 2 components, F(1) - the catalytic core - and F(0) - the membrane proton channel. F(1) has five subunits: alpha(3), beta(3), gamma(1), delta(1), epsilon(1). F(0) has four main subunits: a(1), b(1), b'(1) and c(10-14). The alpha and beta chains form an alternating ring which encloses part of the gamma chain. F(1) is attached to F(0) by a central stalk formed by the gamma and epsilon chains, while a peripheral stalk is formed by the delta, b and b' chains.

The protein resides in the plastid. The protein localises to the organellar chromatophore thylakoid membrane. F(1)F(0) ATP synthase produces ATP from ADP in the presence of a proton or sodium gradient. F-type ATPases consist of two structural domains, F(1) containing the extramembraneous catalytic core and F(0) containing the membrane proton channel, linked together by a central stalk and a peripheral stalk. During catalysis, ATP synthesis in the catalytic domain of F(1) is coupled via a rotary mechanism of the central stalk subunits to proton translocation. Its function is as follows. Component of the F(0) channel, it forms part of the peripheral stalk, linking F(1) to F(0). The protein is ATP synthase subunit b, organellar chromatophore of Paulinella chromatophora.